The following is a 254-amino-acid chain: Alcohol dehydrogenase 2 (254 aa).

10–33 (FVAGLGGIGLDTSREIVKSGPKNL) is a binding site for NAD(+). Position 138 (Ser138) interacts with substrate. Residue Tyr151 is the Proton acceptor of the active site.

Belongs to the short-chain dehydrogenases/reductases (SDR) family. In terms of assembly, homodimer.

It catalyses the reaction a primary alcohol + NAD(+) = an aldehyde + NADH + H(+). It carries out the reaction a secondary alcohol + NAD(+) = a ketone + NADH + H(+). The polypeptide is Alcohol dehydrogenase 2 (Adh2) (Drosophila montana (Fruit fly)).